The primary structure comprises 134 residues: Interleukin-5 (134 aa).

Residues 1-19 (MRMLLHLSLLALGAAYVYA) form the signal peptide. O-linked (GalNAc...) threonine glycosylation occurs at threonine 22. An N-linked (GlcNAc...) asparagine glycan is attached at asparagine 47.

It belongs to the IL-5 family. Homodimer; disulfide-linked. Interacts with IL5RA. Interacts with CSF2RB. As to expression, present in peripheral blood mononuclear cells.

It localises to the secreted. In terms of biological role, homodimeric cytokine expressed predominantly by T-lymphocytes and NK cells that plays an important role in the survival, differentiation, and chemotaxis of eosinophils. Also acts on activated and resting B-cells to induce immunoglobulin production, growth, and differentiation. Mechanistically, exerts its biological effects through a receptor composed of IL5RA subunit and the cytokine receptor common subunit beta/CSF2RB. Binding to the receptor leads to activation of various kinases including LYN, SYK and JAK2 and thereby propagates signals through the RAS-MAPK and JAK-STAT5 pathways respectively. The chain is Interleukin-5 (IL5) from Homo sapiens (Human).